We begin with the raw amino-acid sequence, 235 residues long: uncharacterized protein (235 aa).

The protein to E.coli YbeR.

This is an uncharacterized protein from Escherichia coli (strain K12).